A 424-amino-acid polypeptide reads, in one-letter code: DNA primase DnaG (424 aa).

The region spanning 166–241 is the Toprim domain; the sequence is DTIIIVEGRA…KVDFIARAPE (76 aa). Mg(2+) is bound by residues Glu-172, Asp-215, and Asp-217.

This sequence belongs to the archaeal DnaG primase family. As to quaternary structure, forms a ternary complex with MCM helicase and DNA. Component of the archaeal exosome complex. Requires Mg(2+) as cofactor.

It carries out the reaction ssDNA + n NTP = ssDNA/pppN(pN)n-1 hybrid + (n-1) diphosphate.. In terms of biological role, RNA polymerase that catalyzes the synthesis of short RNA molecules used as primers for DNA polymerase during DNA replication. Also part of the exosome, which is a complex involved in RNA degradation. Acts as a poly(A)-binding protein that enhances the interaction between heteromeric, adenine-rich transcripts and the exosome. This Staphylothermus marinus (strain ATCC 43588 / DSM 3639 / JCM 9404 / F1) protein is DNA primase DnaG.